The following is a 60-amino-acid chain: Cytotoxin 8 (60 aa).

4 cysteine pairs are disulfide-bonded: Cys-3-Cys-21, Cys-14-Cys-38, Cys-42-Cys-53, and Cys-54-Cys-59.

Belongs to the three-finger toxin family. Short-chain subfamily. Type IA cytotoxin sub-subfamily. As to quaternary structure, monomer in solution; Homodimer and oligomer in the presence of negatively charged lipids forming a pore with a size ranging between 20 and 30 Angstroms. In terms of tissue distribution, expressed by the venom gland.

The protein resides in the secreted. The protein localises to the target cell membrane. Functionally, shows cytolytic activity on many different cells by forming pore in lipid membranes. In vivo, increases heart rate or kills the animal by cardiac arrest. In addition, it binds to heparin with high affinity, interacts with Kv channel-interacting protein 1 (KCNIP1) in a calcium-independent manner, and binds to integrin alpha-V/beta-3 (ITGAV/ITGB3) with moderate affinity. In Naja annulifera (Banded Egyptian cobra), this protein is Cytotoxin 8.